A 283-amino-acid chain; its full sequence is Bifunctional protein FolD (283 aa).

NADP(+) is bound by residues 163 to 165, S188, and I229; that span reads GRS.

Belongs to the tetrahydrofolate dehydrogenase/cyclohydrolase family. Homodimer.

The catalysed reaction is (6R)-5,10-methylene-5,6,7,8-tetrahydrofolate + NADP(+) = (6R)-5,10-methenyltetrahydrofolate + NADPH. It carries out the reaction (6R)-5,10-methenyltetrahydrofolate + H2O = (6R)-10-formyltetrahydrofolate + H(+). Its pathway is one-carbon metabolism; tetrahydrofolate interconversion. Its function is as follows. Catalyzes the oxidation of 5,10-methylenetetrahydrofolate to 5,10-methenyltetrahydrofolate and then the hydrolysis of 5,10-methenyltetrahydrofolate to 10-formyltetrahydrofolate. This chain is Bifunctional protein FolD, found in Campylobacter fetus subsp. fetus (strain 82-40).